The primary structure comprises 340 residues: Zinc finger protein 367 (340 aa).

The interval 96-140 (LPTLRGAPPSSASVAAVSGGEDEEEASSPDSGHLKDGIRRGRPRA) is disordered. Positions 101 to 114 (GAPPSSASVAAVSG) are enriched in low complexity. Positions 127–140 (GHLKDGIRRGRPRA) are enriched in basic and acidic residues. 2 C2H2-type zinc fingers span residues 157 to 179 (IRCN…KRTH) and 185 to 209 (YLCD…QRLH). Positions 280-317 (KGKLVQKADQEQQDPLEYLQSDEEDDEKSGAQRRLQEQ) are disordered. Residues 299–332 (QSDEEDDEKSGAQRRLQEQRERLHGALALIELAN) are a coiled coil. Position 300 is a phosphoserine (serine 300). The segment covering 307-317 (KSGAQRRLQEQ) has biased composition (basic and acidic residues).

The protein belongs to the krueppel C2H2-type zinc-finger protein family.

The protein resides in the nucleus. Functionally, transcriptional activator. May be involved in transcriptional activation of erythroid genes. In Rattus norvegicus (Rat), this protein is Zinc finger protein 367 (Znf367).